The following is a 78-amino-acid chain: Acyl carrier protein (78 aa).

Residues 2–77 enclose the Carrier domain; the sequence is SNIEQQVKKI…LAIDYINAHN (76 aa). An O-(pantetheine 4'-phosphoryl)serine modification is found at serine 37.

Belongs to the acyl carrier protein (ACP) family. 4'-phosphopantetheine is transferred from CoA to a specific serine of apo-ACP by AcpS. This modification is essential for activity because fatty acids are bound in thioester linkage to the sulfhydryl of the prosthetic group.

It localises to the cytoplasm. The protein operates within lipid metabolism; fatty acid biosynthesis. In terms of biological role, carrier of the growing fatty acid chain in fatty acid biosynthesis. The polypeptide is Acyl carrier protein (Neisseria gonorrhoeae (strain ATCC 700825 / FA 1090)).